Consider the following 248-residue polypeptide: uncharacterized protein (248 aa).

8-32 (EVALVTGASSGIGKAIALELASAGL) is an NADP(+) binding site. Serine 134 is a binding site for substrate. Tyrosine 147 acts as the Proton acceptor in catalysis.

The protein belongs to the short-chain dehydrogenases/reductases (SDR) family.

This is an uncharacterized protein from Sinorhizobium fredii (strain NBRC 101917 / NGR234).